The following is a 462-amino-acid chain: Elongation factor 1-alpha (462 aa).

Gly-2 carries the post-translational modification Blocked amino end (Gly). In terms of domain architecture, tr-type G spans 5-242 (KIHINIVVIG…DAILPPSRPT (238 aa)). Residues 14–21 (GHVDSGKS) are G1. 14–21 (GHVDSGKS) is a GTP binding site. Lys-36 carries the post-translational modification N6,N6,N6-trimethyllysine. The residue at position 55 (Lys-55) is an N6-methyllysine. Residues 70–74 (GITID) are G2. Lys-79 carries the post-translational modification N6,N6,N6-trimethyllysine. Positions 91–94 (DAPG) are G3. GTP is bound by residues 91–95 (DAPGH) and 153–156 (NKMD). The G4 stretch occupies residues 153 to 156 (NKMD). Residues 194–196 (SGW) form a G5 region. N6,N6,N6-trimethyllysine is present on residues Lys-219 and Lys-318. At Glu-374 the chain carries 5-glutamyl glycerylphosphorylethanolamine.

It belongs to the TRAFAC class translation factor GTPase superfamily. Classic translation factor GTPase family. EF-Tu/EF-1A subfamily. Post-translationally, the N-terminus is blocked.

The protein localises to the cytoplasm. This protein promotes the GTP-dependent binding of aminoacyl-tRNA to the A-site of ribosomes during protein biosynthesis. In Artemia salina (Brine shrimp), this protein is Elongation factor 1-alpha.